We begin with the raw amino-acid sequence, 222 residues long: Glutathione S-transferase A4 (222 aa).

Methionine 1 bears the N-acetylmethionine mark. The GST N-terminal domain occupies 3-83 (ARPKLHYPNG…YIADKHNLFG (81 aa)). Glutathione contacts are provided by residues tyrosine 9, 54-55 (QV), and 67-68 (QT). Residues 85-208 (NLKERTLIDM…EPGSKKKPPP (124 aa)) form the GST C-terminal domain. Tyrosine 212 lines the substrate pocket.

It belongs to the GST superfamily. Alpha family. As to quaternary structure, homodimer. Expressed at a high level in brain, placenta, and skeletal muscle and much lower in lung and liver.

It is found in the cytoplasm. The catalysed reaction is RX + glutathione = an S-substituted glutathione + a halide anion + H(+). In terms of biological role, conjugation of reduced glutathione to a wide number of exogenous and endogenous hydrophobic electrophiles. This isozyme has a high catalytic efficiency with 4-hydroxyalkenals such as 4-hydroxynonenal (4-HNE). In Homo sapiens (Human), this protein is Glutathione S-transferase A4 (GSTA4).